A 251-amino-acid polypeptide reads, in one-letter code: Cell division protein ZapD (251 aa).

The protein belongs to the ZapD family. In terms of assembly, interacts with FtsZ.

It localises to the cytoplasm. Functionally, cell division factor that enhances FtsZ-ring assembly. Directly interacts with FtsZ and promotes bundling of FtsZ protofilaments, with a reduction in FtsZ GTPase activity. The polypeptide is Cell division protein ZapD (Burkholderia cenocepacia (strain ATCC BAA-245 / DSM 16553 / LMG 16656 / NCTC 13227 / J2315 / CF5610) (Burkholderia cepacia (strain J2315))).